The following is a 229-amino-acid chain: Ribose-5-phosphate isomerase A (229 aa).

Residues 28-31 (TGST), 85-88 (DGAD), and 98-101 (KGRG) each bind substrate. The active-site Proton acceptor is Glu-107. Lys-125 is a binding site for substrate.

It belongs to the ribose 5-phosphate isomerase family. As to quaternary structure, homodimer.

It carries out the reaction aldehydo-D-ribose 5-phosphate = D-ribulose 5-phosphate. Its pathway is carbohydrate degradation; pentose phosphate pathway; D-ribose 5-phosphate from D-ribulose 5-phosphate (non-oxidative stage): step 1/1. Functionally, catalyzes the reversible conversion of ribose-5-phosphate to ribulose 5-phosphate. This chain is Ribose-5-phosphate isomerase A, found in Pyrococcus abyssi (strain GE5 / Orsay).